The primary structure comprises 25 residues: Caerin-1.9 (25 aa).

Position 25 is a leucine amide (L25).

The protein belongs to the frog skin active peptide (FSAP) family. Caerin subfamily. As to expression, expressed by the skin dorsal glands.

The protein resides in the secreted. Its function is as follows. Antimicrobial peptide. Adopts an alpha helical conformation which can disrupt bacterial membranes. Strongly inhibits the formation of NO by neuronal nitric oxide synthase (nNOS) at micromolar concentrations. Acts by a non-competitive mechanism, probably by binding to calcium/calmodulin and as a consequence blocking calmodulin attachment to nNOS. The sequence is that of Caerin-1.9 from Ranoidea chloris (Red-eyed tree frog).